Reading from the N-terminus, the 268-residue chain is Phosphonates import ATP-binding protein PhnC (268 aa).

One can recognise an ABC transporter domain in the interval 11–254 (LHAEAVTKRF…EVMAIYQRAE (244 aa)). 43–50 (GLSGSGKS) is a binding site for ATP.

It belongs to the ABC transporter superfamily. Phosphonates importer (TC 3.A.1.9.1) family. The complex is composed of two ATP-binding proteins (PhnC), two transmembrane proteins (PhnE) and a solute-binding protein (PhnD).

The protein resides in the cell membrane. It carries out the reaction phosphonate(out) + ATP + H2O = phosphonate(in) + ADP + phosphate + H(+). Its function is as follows. Part of the ABC transporter complex PhnCDE involved in phosphonates import. Responsible for energy coupling to the transport system. This is Phosphonates import ATP-binding protein PhnC from Nocardia farcinica (strain IFM 10152).